The primary structure comprises 660 residues: Translation factor GUF1, mitochondrial (660 aa).

The N-terminal 42 residues, 1-42 (MRSCVRTASSVLQSWRAHTVLRNGCPLPSRTLERLPRLARSY), are a transit peptide targeting the mitochondrion. Positions 62-242 (ERYRNFCIVA…AVVEKIPAPV (181 aa)) constitute a tr-type G domain. Residues 71 to 78 (AHVDHGKS), 135 to 139 (DTPGH), and 189 to 192 (NKVD) each bind GTP.

This sequence belongs to the TRAFAC class translation factor GTPase superfamily. Classic translation factor GTPase family. LepA subfamily.

It localises to the mitochondrion inner membrane. It catalyses the reaction GTP + H2O = GDP + phosphate + H(+). Its function is as follows. Promotes mitochondrial protein synthesis. May act as a fidelity factor of the translation reaction, by catalyzing a one-codon backward translocation of tRNAs on improperly translocated ribosomes. Binds to mitochondrial ribosomes in a GTP-dependent manner. The sequence is that of Translation factor GUF1, mitochondrial from Phaeosphaeria nodorum (strain SN15 / ATCC MYA-4574 / FGSC 10173) (Glume blotch fungus).